Consider the following 258-residue polypeptide: MTNFTVIIPARYASTRLPGKPLAEIAGKPMIAHVFEKAMQSGAKRVIVATDHEQVATVARGFGAEVCMTSETHQSGTERLAEVVEKLGIAEDEIIVNIQGDEPLIPPAIVRQVAENLAKYQVKMASLAVNITDPEELFNPNAVKVLTDHAGYVLYFSRAPIPWHRDQFASLPKEKSTRGQLVLSDHYLRHIGIYAYRAGFIKQYIQWQPSVLEQIESLEQLRVLWYGEKIHVELAREVPPVGVDTAEDLEKVRSILEK.

It belongs to the KdsB family.

Its subcellular location is the cytoplasm. It catalyses the reaction 3-deoxy-alpha-D-manno-oct-2-ulosonate + CTP = CMP-3-deoxy-beta-D-manno-octulosonate + diphosphate. It participates in nucleotide-sugar biosynthesis; CMP-3-deoxy-D-manno-octulosonate biosynthesis; CMP-3-deoxy-D-manno-octulosonate from 3-deoxy-D-manno-octulosonate and CTP: step 1/1. Its pathway is bacterial outer membrane biogenesis; lipopolysaccharide biosynthesis. In terms of biological role, activates KDO (a required 8-carbon sugar) for incorporation into bacterial lipopolysaccharide in Gram-negative bacteria. This Pasteurella multocida (strain Pm70) protein is 3-deoxy-manno-octulosonate cytidylyltransferase.